We begin with the raw amino-acid sequence, 309 residues long: Protein FdhE homolog (309 aa).

This sequence belongs to the FdhE family.

The protein localises to the cytoplasm. In terms of biological role, necessary for formate dehydrogenase activity. The protein is Protein FdhE homolog of Klebsiella pneumoniae (strain 342).